Here is a 669-residue protein sequence, read N- to C-terminus: DNA ligase (669 aa).

NAD(+)-binding positions include 34–38 (DAEYD), 83–84 (SL), and E114. Residue K116 is the N6-AMP-lysine intermediate of the active site. 4 residues coordinate NAD(+): R137, E171, K287, and K311. The Zn(2+) site is built by C405, C408, C423, and C428. The BRCT domain maps to 591-669 (NVESYFAGKT…EERFLQELNK (79 aa)).

It belongs to the NAD-dependent DNA ligase family. LigA subfamily. It depends on Mg(2+) as a cofactor. Mn(2+) is required as a cofactor.

The catalysed reaction is NAD(+) + (deoxyribonucleotide)n-3'-hydroxyl + 5'-phospho-(deoxyribonucleotide)m = (deoxyribonucleotide)n+m + AMP + beta-nicotinamide D-nucleotide.. Its function is as follows. DNA ligase that catalyzes the formation of phosphodiester linkages between 5'-phosphoryl and 3'-hydroxyl groups in double-stranded DNA using NAD as a coenzyme and as the energy source for the reaction. It is essential for DNA replication and repair of damaged DNA. In Bacillus cereus (strain ATCC 10987 / NRS 248), this protein is DNA ligase.